The following is a 29-amino-acid chain: Lambda-theraphotoxin-Ec2b (29 aa).

Intrachain disulfides connect Cys-2-Cys-16, Cys-9-Cys-21, and Cys-15-Cys-25.

This sequence belongs to the neurotoxin 30 (phrixotoxin) family. In terms of tissue distribution, expressed by the venom gland.

It localises to the secreted. Insect-selective neurotoxin that potently blocks insect calcium-activated potassium (BKCa) channels (Slo-type) in cockroach dorsal unpaired median (DUM) neurons (IC(50)=25.3 nM). This occurs in the absence of any shifts in the voltage dependence of activation. May interact with the turret and/or loop region of the external entrance to the channel and does not project deeply into the pore of the channel. In vivo, does not show toxicity in mice after intracerebroventricular injection of up to 25 pmol/g (1.8 ug/20 g mouse). The protein is Lambda-theraphotoxin-Ec2b of Eucratoscelus constrictus (African red-rump baboon spider).